The primary structure comprises 690 residues: Elongation factor G (690 aa).

Residues 8 to 282 form the tr-type G domain; it reads KMTRNIGIMA…AVIDYLPSPL (275 aa). GTP contacts are provided by residues 17–24, 81–85, and 135–138; these read AHIDAGKT, DTPGH, and NKMD.

This sequence belongs to the TRAFAC class translation factor GTPase superfamily. Classic translation factor GTPase family. EF-G/EF-2 subfamily.

The protein localises to the cytoplasm. Functionally, catalyzes the GTP-dependent ribosomal translocation step during translation elongation. During this step, the ribosome changes from the pre-translocational (PRE) to the post-translocational (POST) state as the newly formed A-site-bound peptidyl-tRNA and P-site-bound deacylated tRNA move to the P and E sites, respectively. Catalyzes the coordinated movement of the two tRNA molecules, the mRNA and conformational changes in the ribosome. This chain is Elongation factor G, found in Acholeplasma laidlawii (strain PG-8A).